Consider the following 111-residue polypeptide: Stress-response A/B barrel domain-containing protein At5g22580 (111 aa).

A Stress-response A/B barrel domain is found at 6–98 (FKHLVVVKFK…VIDKIVLLDF (93 aa)). Mg(2+) contacts are provided by Val31, Ile34, Asp35, and Val37.

Homodimer. It depends on Mg(2+) as a cofactor.

Its function is as follows. Involved in stress response. The sequence is that of Stress-response A/B barrel domain-containing protein At5g22580 from Arabidopsis thaliana (Mouse-ear cress).